Consider the following 466-residue polypeptide: Alpha-1,3-mannosyltransferase CMT1 (466 aa).

The tract at residues Met1–Ser23 is disordered. Residues Met1–Ser33 lie on the Cytoplasmic side of the membrane. The helical; Signal-anchor for type II membrane protein transmembrane segment at Pro34 to Pro54 threads the bilayer. The Lumenal portion of the chain corresponds to Asp55 to Glu466.

Mg(2+) is required as a cofactor. Mn(2+) serves as cofactor. Requires Co(2+) as cofactor.

Its subcellular location is the golgi apparatus membrane. It functions in the pathway protein modification; protein glycosylation. In terms of biological role, responsible for addition of mannose residues in an alpha-1,3 linkage to a polymannosly precursor. May be involved in synthesis of capsule glucuronoxylomannan. This chain is Alpha-1,3-mannosyltransferase CMT1, found in Cryptococcus neoformans var. neoformans serotype D (strain JEC21 / ATCC MYA-565) (Filobasidiella neoformans).